Here is a 429-residue protein sequence, read N- to C-terminus: Glutamate-1-semialdehyde 2,1-aminomutase 1 (429 aa).

N6-(pyridoxal phosphate)lysine is present on K268.

Belongs to the class-III pyridoxal-phosphate-dependent aminotransferase family. HemL subfamily. In terms of assembly, homodimer. Requires pyridoxal 5'-phosphate as cofactor.

It localises to the cytoplasm. It carries out the reaction (S)-4-amino-5-oxopentanoate = 5-aminolevulinate. The protein operates within porphyrin-containing compound metabolism; protoporphyrin-IX biosynthesis; 5-aminolevulinate from L-glutamyl-tRNA(Glu): step 2/2. The chain is Glutamate-1-semialdehyde 2,1-aminomutase 1 from Listeria welshimeri serovar 6b (strain ATCC 35897 / DSM 20650 / CCUG 15529 / CIP 8149 / NCTC 11857 / SLCC 5334 / V8).